Consider the following 330-residue polypeptide: D-alanine--D-alanine ligase (330 aa).

The ATP-grasp domain occupies 120 to 326; sequence KLWYDALGIP…FKTFLQKAVL (207 aa). 150 to 205 provides a ligand contact to ATP; that stretch reads AFKQWGGLFVKAACQGSSVGCYKVTSEEELAQAINGAFGYSQQVLVEKAVKPRELE. Mg(2+) contacts are provided by Asp-280, Glu-293, and Asn-295.

The protein belongs to the D-alanine--D-alanine ligase family. The cofactor is Mg(2+). It depends on Mn(2+) as a cofactor.

The protein resides in the cytoplasm. The enzyme catalyses 2 D-alanine + ATP = D-alanyl-D-alanine + ADP + phosphate + H(+). It functions in the pathway cell wall biogenesis; peptidoglycan biosynthesis. Its function is as follows. Cell wall formation. The protein is D-alanine--D-alanine ligase of Aliivibrio fischeri (strain MJ11) (Vibrio fischeri).